A 101-amino-acid polypeptide reads, in one-letter code: Iron-sulfur cluster assembly protein CyaY (101 aa).

Belongs to the frataxin family.

Functionally, involved in iron-sulfur (Fe-S) cluster assembly. May act as a regulator of Fe-S biogenesis. The polypeptide is Iron-sulfur cluster assembly protein CyaY (Rickettsia felis (strain ATCC VR-1525 / URRWXCal2) (Rickettsia azadi)).